Reading from the N-terminus, the 106-residue chain is Large ribosomal subunit protein eL42 (106 aa).

It belongs to the eukaryotic ribosomal protein eL42 family.

The protein resides in the cytoplasm. This is Large ribosomal subunit protein eL42 (RPL44) from Trypanosoma brucei brucei.